The primary structure comprises 49 residues: Large ribosomal subunit protein bL33 (49 aa).

It belongs to the bacterial ribosomal protein bL33 family.

The polypeptide is Large ribosomal subunit protein bL33 (Finegoldia magna (strain ATCC 29328 / DSM 20472 / WAL 2508) (Peptostreptococcus magnus)).